We begin with the raw amino-acid sequence, 149 residues long: Endoribonuclease YbeY (149 aa).

Positions 115, 119, and 125 each coordinate Zn(2+).

It belongs to the endoribonuclease YbeY family. It depends on Zn(2+) as a cofactor.

It localises to the cytoplasm. Single strand-specific metallo-endoribonuclease involved in late-stage 70S ribosome quality control and in maturation of the 3' terminus of the 16S rRNA. This is Endoribonuclease YbeY from Mycoplasmopsis pulmonis (strain UAB CTIP) (Mycoplasma pulmonis).